The sequence spans 478 residues: Serine/threonine-protein phosphatase T (478 aa).

TPR repeat units lie at residues 9-42, 43-76, and 78-110; these read ATAL…YDRE, PSFF…DPAY, and KAYW…EPNN. Residues 151-463 form a catalytic region; it reads AVDDSYDGVR…QVFEAVPHPD (313 aa). Asp-221, His-223, Asp-250, and Asn-282 together coordinate Mn(2+). The active-site Proton donor/acceptor is His-283. Residues His-331 and His-408 each coordinate Mn(2+).

It belongs to the PPP phosphatase family. PP-5 (PP-T) subfamily. The cofactor is Mg(2+). Requires Mn(2+) as cofactor.

It localises to the nucleus. It carries out the reaction O-phospho-L-seryl-[protein] + H2O = L-seryl-[protein] + phosphate. The catalysed reaction is O-phospho-L-threonyl-[protein] + H2O = L-threonyl-[protein] + phosphate. In terms of biological role, protein phosphatase that specifically binds to and dephosphorylates the molecular chaperone Hsp90. Dephosphorylation positively regulates the Hsp90 chaperone machinery. This chain is Serine/threonine-protein phosphatase T, found in Aspergillus oryzae (strain ATCC 42149 / RIB 40) (Yellow koji mold).